Consider the following 273-residue polypeptide: Shikimate dehydrogenase (NADP(+)) (273 aa).

Residues 15-17 and Thr-62 contribute to the shikimate site; that span reads SKS. Catalysis depends on Lys-66, which acts as the Proton acceptor. An NADP(+)-binding site is contributed by Asp-78. Shikimate-binding residues include Asn-87 and Asp-103. NADP(+) contacts are provided by residues 127 to 131, 150 to 155, and Met-214; these read GAGGA and NRTYAR. Residue Tyr-216 participates in shikimate binding. An NADP(+)-binding site is contributed by Gly-238.

The protein belongs to the shikimate dehydrogenase family. As to quaternary structure, homodimer.

The catalysed reaction is shikimate + NADP(+) = 3-dehydroshikimate + NADPH + H(+). It functions in the pathway metabolic intermediate biosynthesis; chorismate biosynthesis; chorismate from D-erythrose 4-phosphate and phosphoenolpyruvate: step 4/7. In terms of biological role, involved in the biosynthesis of the chorismate, which leads to the biosynthesis of aromatic amino acids. Catalyzes the reversible NADPH linked reduction of 3-dehydroshikimate (DHSA) to yield shikimate (SA). The polypeptide is Shikimate dehydrogenase (NADP(+)) (Yersinia enterocolitica serotype O:8 / biotype 1B (strain NCTC 13174 / 8081)).